An 82-amino-acid chain; its full sequence is Metallothionein (82 aa).

The Cd(2+) site is built by Cys6, Cys8, Cys11, Cys13, Cys29, Cys33, His37, Cys43, Cys48, and Cys50. 3 residues coordinate Zn(2+): Cys6, Cys8, and Cys11. Zn(2+) contacts are provided by Cys29, Cys33, His37, Cys43, Cys48, and Cys50. Positions 61–82 are disordered; it reads ITNNQLDEALEETFPASDPISP.

Belongs to the metallothionein superfamily.

Its function is as follows. Metallothioneins are small proteins that have a high content of cysteine residues which allow them to bind heavy metal ions through clusters of thiolate bonds. Preferentially, binds four Cd(2+) ions. Also binds three Zn(2+) ions but with less affinity. Required for long-term viability. May play a role in the storage or sequestration of metals when present in excess. This is Metallothionein from Pseudomonas fluorescens (strain Q2-87).